We begin with the raw amino-acid sequence, 228 residues long: Biosynthetic peptidoglycan transglycosylase (228 aa).

Residues 8-28 (ILAALVAAFLLYNLWVLGHII) traverse the membrane as a helical segment.

This sequence belongs to the glycosyltransferase 51 family.

It is found in the cell inner membrane. It carries out the reaction [GlcNAc-(1-&gt;4)-Mur2Ac(oyl-L-Ala-gamma-D-Glu-L-Lys-D-Ala-D-Ala)](n)-di-trans,octa-cis-undecaprenyl diphosphate + beta-D-GlcNAc-(1-&gt;4)-Mur2Ac(oyl-L-Ala-gamma-D-Glu-L-Lys-D-Ala-D-Ala)-di-trans,octa-cis-undecaprenyl diphosphate = [GlcNAc-(1-&gt;4)-Mur2Ac(oyl-L-Ala-gamma-D-Glu-L-Lys-D-Ala-D-Ala)](n+1)-di-trans,octa-cis-undecaprenyl diphosphate + di-trans,octa-cis-undecaprenyl diphosphate + H(+). It functions in the pathway cell wall biogenesis; peptidoglycan biosynthesis. In terms of biological role, peptidoglycan polymerase that catalyzes glycan chain elongation from lipid-linked precursors. This is Biosynthetic peptidoglycan transglycosylase from Chromobacterium violaceum (strain ATCC 12472 / DSM 30191 / JCM 1249 / CCUG 213 / NBRC 12614 / NCIMB 9131 / NCTC 9757 / MK).